Reading from the N-terminus, the 352-residue chain is Leukotriene B4 receptor 1 (352 aa).

Residues 1-19 lie on the Extracellular side of the membrane; it reads MNTTSSAAPPSLGVEFISL. N2 is a glycosylation site (N-linked (GlcNAc...) asparagine). Residues 20 to 42 traverse the membrane as a helical segment; sequence LAIILLSVALAVGLPGNSFVVWS. Topologically, residues 43–54 are cytoplasmic; the sequence is ILKRMQKRSVTA. Residues 55–75 form a helical membrane-spanning segment; it reads LMVLNLALADLAVLLTAPFFL. Over 76–91 the chain is Extracellular; it reads HFLAQGTWSFGLAGCR. A helical membrane pass occupies residues 92–113; it reads LCHYVCGVSMYASVLLITAMSL. The Cytoplasmic segment spans residues 114 to 138; it reads DRSLAVARPFVSQKLRTKAMARRVL. Residues 139 to 159 traverse the membrane as a helical segment; it reads AGIWVLSFLLATPVLAYRTVV. Over 160-178 the chain is Extracellular; the sequence is PWKTNMSLCFPRYPSEGHR. N164 carries an N-linked (GlcNAc...) asparagine glycan. Residues 179 to 199 traverse the membrane as a helical segment; sequence AFHLIFEAVTGFLLPFLAVVA. The Cytoplasmic segment spans residues 200–221; the sequence is SYSDIGRRLQARRFRRSRRTGR. Residues 222-242 form a helical membrane-spanning segment; the sequence is LVVLIILTFAAFWLPYHVVNL. Topologically, residues 243–268 are extracellular; that stretch reads AEAGRALAGQAAGLGLVGKRLSLARN. A helical transmembrane segment spans residues 269 to 289; that stretch reads VLIALAFLSSSVNPVLYACAG. Topologically, residues 290–352 are cytoplasmic; sequence GGLLRSAGVG…SSPLKLNELN (63 aa). Polar residues-rich tracts occupy residues 310–326 and 338–352; these read SEAS…QTAR and ESLT…NELN. The tract at residues 310–352 is disordered; it reads SEASSTRRGGSLGQTARSGPAALEPGPSESLTASSPLKLNELN.

Belongs to the G-protein coupled receptor 1 family. Phosphorylated by GRK6 upon leukotriene B4 binding; which promotes desensitization. Expressed at highest levels in heart, skeletal muscle and at lower levels in brain and liver. High level of expression in lymphoid tissues.

It is found in the cell membrane. In terms of biological role, receptor for extracellular ATP &gt; UTP and ADP. The activity of this receptor is mediated by G proteins which activate a phosphatidylinositol-calcium second messenger system. May be the cardiac P2Y receptor involved in the regulation of cardiac muscle contraction through modulation of L-type calcium currents. Is a receptor for leukotriene B4, a potent chemoattractant involved in inflammation and immune response. This is Leukotriene B4 receptor 1 (LTB4R) from Homo sapiens (Human).